The following is a 426-amino-acid chain: Tol-Pal system protein TolB (426 aa).

A signal peptide spans 1 to 24 (MKLKSRFTSIIGVITLFFSQTVTA).

The protein belongs to the TolB family. In terms of assembly, the Tol-Pal system is composed of five core proteins: the inner membrane proteins TolA, TolQ and TolR, the periplasmic protein TolB and the outer membrane protein Pal. They form a network linking the inner and outer membranes and the peptidoglycan layer.

The protein localises to the periplasm. Its function is as follows. Part of the Tol-Pal system, which plays a role in outer membrane invagination during cell division and is important for maintaining outer membrane integrity. In Actinobacillus pleuropneumoniae serotype 5b (strain L20), this protein is Tol-Pal system protein TolB.